The following is a 444-amino-acid chain: Pentatricopeptide repeat-containing protein At4g35850, mitochondrial (444 aa).

The transit peptide at 1–25 (MKFLMQSISGRNRSLVRALVSRRYF) directs the protein to the mitochondrion. PPR repeat units follow at residues 40-74 (DLSE…GVQP), 75-109 (TADI…GIAP), 110-144 (DVNL…DVKP), 145-179 (NGQT…GVGL), 255-289 (NLTV…GKDT), and 290-325 (DTYC…KIPA).

Belongs to the PPR family. P subfamily.

The protein resides in the mitochondrion. This is Pentatricopeptide repeat-containing protein At4g35850, mitochondrial from Arabidopsis thaliana (Mouse-ear cress).